Here is a 365-residue protein sequence, read N- to C-terminus: 3-dehydroquinate synthase (365 aa).

NAD(+) contacts are provided by residues G107–D111, T131–S132, K144, and K153. E186, H251, and H268 together coordinate Zn(2+).

The protein belongs to the sugar phosphate cyclases superfamily. Dehydroquinate synthase family. The cofactor is Co(2+). Requires Zn(2+) as cofactor. NAD(+) serves as cofactor.

It localises to the cytoplasm. It carries out the reaction 7-phospho-2-dehydro-3-deoxy-D-arabino-heptonate = 3-dehydroquinate + phosphate. It participates in metabolic intermediate biosynthesis; chorismate biosynthesis; chorismate from D-erythrose 4-phosphate and phosphoenolpyruvate: step 2/7. Functionally, catalyzes the conversion of 3-deoxy-D-arabino-heptulosonate 7-phosphate (DAHP) to dehydroquinate (DHQ). This Crocosphaera subtropica (strain ATCC 51142 / BH68) (Cyanothece sp. (strain ATCC 51142)) protein is 3-dehydroquinate synthase.